A 226-amino-acid polypeptide reads, in one-letter code: N-acetyltransferase family 8 member 2 (226 aa).

2 helical membrane-spanning segments follow: residues 33 to 55 (FYHV…TIIL) and 60 to 82 (WLLA…WVSC). The N-acetyltransferase domain maps to 69-221 (LFLLCLRLIF…FHFTYSLPSV (153 aa)). Lysine 204 carries the N6-acetyllysine modification.

The protein belongs to the camello family.

The protein localises to the membrane. Probable acetyltransferase. Has no detectable histone acetyltransferase activity towards histone H3 or H4. In Rattus norvegicus (Rat), this protein is N-acetyltransferase family 8 member 2.